Reading from the N-terminus, the 507-residue chain is Putative propionyl-CoA carboxylase beta chain (507 aa).

The segment covering M1–A25 has biased composition (basic and acidic residues). The interval M1–K30 is disordered. A CoA carboxyltransferase N-terminal domain is found at M1 to E254. A carboxyltransferase region spans residues M1–K501. One can recognise a CoA carboxyltransferase C-terminal domain in the interval E256–K501.

This sequence belongs to the AccD/PCCB family. In terms of assembly, probably a dodecamer composed of six biotin-containing alpha subunits and six beta subunits.

It carries out the reaction propanoyl-CoA + hydrogencarbonate + ATP = (S)-methylmalonyl-CoA + ADP + phosphate + H(+). It participates in metabolic intermediate metabolism; propanoyl-CoA degradation; succinyl-CoA from propanoyl-CoA: step 1/3. This Bacillus subtilis (strain 168) protein is Putative propionyl-CoA carboxylase beta chain (yqjD).